The primary structure comprises 520 residues: 2-isopropylmalate synthase (520 aa).

Residues 12–274 (VVIFDTTLRD…DTGIDTTMLT (263 aa)) enclose the Pyruvate carboxyltransferase domain. Residues aspartate 21, histidine 209, histidine 211, and asparagine 245 each coordinate Mn(2+). The segment at 398 to 520 (KLLSLSVIAG…RLHAQHAAVV (123 aa)) is regulatory domain.

This sequence belongs to the alpha-IPM synthase/homocitrate synthase family. LeuA type 1 subfamily. As to quaternary structure, homodimer. It depends on Mn(2+) as a cofactor.

The protein localises to the cytoplasm. The enzyme catalyses 3-methyl-2-oxobutanoate + acetyl-CoA + H2O = (2S)-2-isopropylmalate + CoA + H(+). Its pathway is amino-acid biosynthesis; L-leucine biosynthesis; L-leucine from 3-methyl-2-oxobutanoate: step 1/4. Catalyzes the condensation of the acetyl group of acetyl-CoA with 3-methyl-2-oxobutanoate (2-ketoisovalerate) to form 3-carboxy-3-hydroxy-4-methylpentanoate (2-isopropylmalate). This Methylorubrum populi (strain ATCC BAA-705 / NCIMB 13946 / BJ001) (Methylobacterium populi) protein is 2-isopropylmalate synthase.